The primary structure comprises 339 residues: Glycerol-3-phosphate dehydrogenase [NAD(P)+] (339 aa).

The NADPH site is built by Ser-15, Tyr-16, His-36, and Lys-110. Residues Lys-110, Gly-139, and Thr-141 each contribute to the sn-glycerol 3-phosphate site. Ala-143 is an NADPH binding site. The sn-glycerol 3-phosphate site is built by Lys-195, Asp-248, Ser-258, Arg-259, and Asn-260. Lys-195 acts as the Proton acceptor in catalysis. Position 259 (Arg-259) interacts with NADPH. Residues Val-283 and Glu-285 each coordinate NADPH.

It belongs to the NAD-dependent glycerol-3-phosphate dehydrogenase family.

The protein localises to the cytoplasm. It carries out the reaction sn-glycerol 3-phosphate + NAD(+) = dihydroxyacetone phosphate + NADH + H(+). It catalyses the reaction sn-glycerol 3-phosphate + NADP(+) = dihydroxyacetone phosphate + NADPH + H(+). Its pathway is membrane lipid metabolism; glycerophospholipid metabolism. Functionally, catalyzes the reduction of the glycolytic intermediate dihydroxyacetone phosphate (DHAP) to sn-glycerol 3-phosphate (G3P), the key precursor for phospholipid synthesis. The chain is Glycerol-3-phosphate dehydrogenase [NAD(P)+] from Shigella flexneri serotype 5b (strain 8401).